The following is a 235-amino-acid chain: Succinate dehydrogenase iron-sulfur subunit (235 aa).

[2Fe-2S] cluster-binding residues include C53, C58, and C73. The region spanning 133 to 163 is the 4Fe-4S ferredoxin-type domain; sequence ERAKLDGLYECILCACCSSSCPSYWWNPDKF. Residues C143, C146, and C149 each contribute to the [4Fe-4S] cluster site. A [3Fe-4S] cluster-binding site is contributed by C153. W158 provides a ligand contact to a ubiquinone. Residues C200 and C206 each contribute to the [3Fe-4S] cluster site. [4Fe-4S] cluster is bound at residue C210.

The protein belongs to the succinate dehydrogenase/fumarate reductase iron-sulfur protein family. As to quaternary structure, part of an enzyme complex containing four subunits: a flavoprotein, an iron-sulfur protein, cytochrome b-556 and a hydrophobic protein. The cofactor is [2Fe-2S] cluster. It depends on [3Fe-4S] cluster as a cofactor. [4Fe-4S] cluster serves as cofactor.

It carries out the reaction a quinone + succinate = fumarate + a quinol. The protein operates within carbohydrate metabolism; tricarboxylic acid cycle; fumarate from succinate (bacterial route): step 1/1. In Coxiella burnetii (strain RSA 493 / Nine Mile phase I), this protein is Succinate dehydrogenase iron-sulfur subunit (sdhB).